Here is a 525-residue protein sequence, read N- to C-terminus: 2,3-bisphosphoglycerate-independent phosphoglycerate mutase (525 aa).

2 residues coordinate Mn(2+): D15 and S65. The active-site Phosphoserine intermediate is S65. Substrate contacts are provided by residues H126, R156–D157, R188, R194, R258–R261, and K331. Mn(2+) contacts are provided by D398, H402, D439, H440, and H457.

The protein belongs to the BPG-independent phosphoglycerate mutase family. Monomer. The cofactor is Mn(2+).

The catalysed reaction is (2R)-2-phosphoglycerate = (2R)-3-phosphoglycerate. The protein operates within carbohydrate degradation; glycolysis; pyruvate from D-glyceraldehyde 3-phosphate: step 3/5. Functionally, catalyzes the interconversion of 2-phosphoglycerate and 3-phosphoglycerate. The protein is 2,3-bisphosphoglycerate-independent phosphoglycerate mutase of Picosynechococcus sp. (strain ATCC 27264 / PCC 7002 / PR-6) (Agmenellum quadruplicatum).